The chain runs to 1162 residues: Lysine-specific demethylase 2A (1162 aa).

A Phosphoserine modification is found at Ser-28. Residues 148–316 enclose the JmjC domain; that stretch reads FSHTRLENMV…MQLKIYNIED (169 aa). Thr-209 lines the substrate pocket. Fe cation contacts are provided by His-212 and Asp-214. Lys-229 serves as a coordination point for substrate. His-284 contacts Fe cation. The interval 367–389 is disordered; the sequence is GLESGNGDEEAVDREPRRLSSRR. Phosphoserine occurs at positions 390 and 394. Residue Lys-505 forms a Glycyl lysine isopeptide (Lys-Gly) (interchain with G-Cter in SUMO2) linkage. Residues 532–557 form a disordered region; sequence VPTIPITKPHTMKPAPRLTPVRPAAA. Residue Thr-550 is modified to Phosphothreonine. A Phosphoserine modification is found at Ser-558. Residues 564 to 610 form a CXXC-type zinc finger; it reads ARRRRVRCRKCKACVQGECGVCHYCRDMKKFGGPGRMKQSCVLRQCL. 10 residues coordinate Zn(2+): Cys-571, Cys-574, Cys-577, Cys-582, Cys-585, Cys-588, Cys-604, Cys-609, Cys-620, and Cys-623. The PHD-type zinc finger occupies 617 to 678; that stretch reads SVTCSLCGEV…CWECPKCYQE (62 aa). Thr-632 is modified (phosphothreonine). Cys-642, Cys-645, His-650, Cys-653, Cys-672, and Cys-675 together coordinate Zn(2+). A Phosphoserine modification is found at Ser-692. A disordered region spans residues 704–789; the sequence is PLRSCDEPLT…PSGKKELSEV (86 aa). At Thr-713 the chain carries Phosphothreonine. Ser-718 and Ser-731 each carry phosphoserine. Basic and acidic residues-rich tracts occupy residues 746 to 757 and 771 to 789; these read SDHHSASRDERF and TMVR…LSEV. Phosphoserine is present on residues Ser-825, Ser-832, Ser-869, and Ser-883. The segment at 839-887 is disordered; sequence HCPARTPQRGDEEGLGGEEEEEEEEEEEDDSAEEGGAARLNGRGSWAQD. Over residues 851–871 the composition is skewed to acidic residues; the sequence is EGLGGEEEEEEEEEEEDDSAE. The F-box domain occupies 889 to 936; that stretch reads DESWMQREVWMSVFRYLSRRELCECMRVCKTWYKWCCDKRLWTKIDLS. LRR repeat units lie at residues 961 to 982 and 984 to 1010; these read WTNI…LKDL and LAGC…DLRW. Arg-1020 is subject to ADP-ribosylarginine. 4 LRR repeats span residues 1048–1073, 1074–1103, 1104–1128, and 1129–1156; these read GLDI…DLSH, CSHL…NMAG, CNKL…DLRG, and CKQI…SDEK.

This sequence belongs to the JHDM1 histone demethylase family. As to quaternary structure, interacts with CBX5/HP1A; the interaction promotes CBX5 localization to chromatin. The SKP1-KDM2A complex interacts with UBB. Part of a SCF (SKP1-cullin-F-box) protein ligase complex. Fe(2+) serves as cofactor. Post-translationally, mono-ADP-ribosylated at Arg-1020 in response to DNA damage, leading to displacement from chromatin, resulting in increased dimethylation of histone H3 at 'Lys-36'. Widely expressed, with highest levels in brain, testis and ovary, followed by lung.

It localises to the nucleus. Its subcellular location is the nucleoplasm. It is found in the chromosome. It catalyses the reaction N(6),N(6)-dimethyl-L-lysyl(36)-[histone H3] + 2 2-oxoglutarate + 2 O2 = L-lysyl(36)-[histone H3] + 2 formaldehyde + 2 succinate + 2 CO2. In terms of biological role, histone demethylase that specifically demethylates 'Lys-36' of histone H3, thereby playing a central role in histone code. Preferentially demethylates dimethylated H3 'Lys-36' residue while it has weak or no activity for mono- and tri-methylated H3 'Lys-36'. May also recognize and bind to some phosphorylated proteins and promote their ubiquitination and degradation. Required to maintain the heterochromatic state. Associates with centromeres and represses transcription of small non-coding RNAs that are encoded by the clusters of satellite repeats at the centromere. Required to sustain centromeric integrity and genomic stability, particularly during mitosis. Regulates circadian gene expression by repressing the transcriptional activator activity of CLOCK-BMAL1 heterodimer and RORA in a catalytically-independent manner. The sequence is that of Lysine-specific demethylase 2A (KDM2A) from Homo sapiens (Human).